Here is a 617-residue protein sequence, read N- to C-terminus: Protein fem-1 homolog A (617 aa).

ANK repeat units lie at residues 2 to 32, 40 to 70, 82 to 111, 115 to 144, 148 to 177, 181 to 210, and 213 to 242; these read DISA…EERA, EGGT…NVAL, EGAP…PVNN, TNST…DLEV, HGHT…DVNR, KGNT…RMER, and YGMT…ASRE. TPR repeat units lie at residues 245-279 and 339-372; these read IHAL…RWAG and SYYI…QQSN. ANK repeat units lie at residues 482 to 524 and 528 to 557; these read GGHT…DVDS and DNNT…HFDA.

This sequence belongs to the fem-1 family. In terms of assembly, component of a CRL2 E3 ubiquitin-protein ligase complex, also named ECS (Elongin BC-CUL2/5-SOCS-box protein) complex.

The protein localises to the mitochondrion. Its subcellular location is the cytoplasm. The protein operates within protein modification; protein ubiquitination. Substrate-recognition component of a Cul2-RING (CRL2) E3 ubiquitin-protein ligase complex of the DesCEND (destruction via C-end degrons) pathway, which recognizes a C-degron located at the extreme C terminus of target proteins, leading to their ubiquitination and degradation. The C-degron recognized by the DesCEND pathway is usually a motif of less than ten residues and can be present in full-length proteins, truncated proteins or proteolytically cleaved forms. The CRL2(FEM1A) complex specifically recognizes proteins with an arginine at the C-terminus: recognizes and binds proteins ending with -Lys/Arg-Xaa-Arg and -Lys/Arg-Xaa-Xaa-Arg C-degrons, leading to their ubiquitination and degradation. This Danio rerio (Zebrafish) protein is Protein fem-1 homolog A.